Consider the following 138-residue polypeptide: Large ribosomal subunit protein uL16 (138 aa).

The protein belongs to the universal ribosomal protein uL16 family. As to quaternary structure, part of the 50S ribosomal subunit.

Binds 23S rRNA and is also seen to make contacts with the A and possibly P site tRNAs. In Corynebacterium kroppenstedtii (strain DSM 44385 / JCM 11950 / CIP 105744 / CCUG 35717), this protein is Large ribosomal subunit protein uL16.